The following is a 100-amino-acid chain: Small ribosomal subunit protein uS14 (100 aa).

It belongs to the universal ribosomal protein uS14 family. In terms of assembly, part of the 30S ribosomal subunit. Contacts proteins S3 and S10.

In terms of biological role, binds 16S rRNA, required for the assembly of 30S particles and may also be responsible for determining the conformation of the 16S rRNA at the A site. This chain is Small ribosomal subunit protein uS14, found in Rippkaea orientalis (strain PCC 8801 / RF-1) (Cyanothece sp. (strain PCC 8801)).